Here is a 311-residue protein sequence, read N- to C-terminus: tRNA dimethylallyltransferase (311 aa).

19–26 (GPSGSGKS) serves as a coordination point for ATP. 21 to 26 (SGSGKS) contributes to the substrate binding site. The segment at 44-47 (DSLS) is interaction with substrate tRNA.

Belongs to the IPP transferase family. Monomer. Mg(2+) is required as a cofactor.

The enzyme catalyses adenosine(37) in tRNA + dimethylallyl diphosphate = N(6)-dimethylallyladenosine(37) in tRNA + diphosphate. Functionally, catalyzes the transfer of a dimethylallyl group onto the adenine at position 37 in tRNAs that read codons beginning with uridine, leading to the formation of N6-(dimethylallyl)adenosine (i(6)A). This Helicobacter pylori (strain ATCC 700392 / 26695) (Campylobacter pylori) protein is tRNA dimethylallyltransferase.